A 171-amino-acid polypeptide reads, in one-letter code: MKEYLTNERIRAKQVRVVGPDGKQLGIMDTREALRLAQEMDLDLVLVGPNADPPVARIMDYSKWRYEQQMAEKEARKKAKRTEVKSIKFRVKIDEHDYQTKLGHIKRFLQEGHKVKVTIMFRGREVAHPELGERILNRVTEDLKDLAVVEMKPEMLGRDMNMLLAPVKVSA.

Belongs to the IF-3 family. Monomer.

Its subcellular location is the cytoplasm. Its function is as follows. IF-3 binds to the 30S ribosomal subunit and shifts the equilibrium between 70S ribosomes and their 50S and 30S subunits in favor of the free subunits, thus enhancing the availability of 30S subunits on which protein synthesis initiation begins. In Thermus thermophilus (strain ATCC BAA-163 / DSM 7039 / HB27), this protein is Translation initiation factor IF-3.